Here is a 166-residue protein sequence, read N- to C-terminus: Large ribosomal subunit protein uL10 (166 aa).

The protein belongs to the universal ribosomal protein uL10 family. Part of the ribosomal stalk of the 50S ribosomal subunit. The N-terminus interacts with L11 and the large rRNA to form the base of the stalk. The C-terminus forms an elongated spine to which L12 dimers bind in a sequential fashion forming a multimeric L10(L12)X complex.

In terms of biological role, forms part of the ribosomal stalk, playing a central role in the interaction of the ribosome with GTP-bound translation factors. This chain is Large ribosomal subunit protein uL10, found in Streptococcus uberis (strain ATCC BAA-854 / 0140J).